A 658-amino-acid polypeptide reads, in one-letter code: MRFAIPLGAACAWAGVALAALQIAEDDSTITLNNDRFKAVWSKSKGSVVDMFLDGQDLLGPQSGSTGIGPYLDCYCVPSGFYTAGATNPRMQYVEGTDSTGTNYAGVILNDTYTPTGQQFQQYWFLRDGETGLHMFSRLAYYNETTPFLRNLQEFRTLFRPNTQLWTHLTSSELQTAPLPSKNAVSKQVVVQDATWRFNNTPDDAYYTQFSEYFTKYTFSNQWRDNDVHGLYGDGTNSNGSTYGAWLVMNTKGPLHSDLTVDGIVYNYIVSNHHGEGTPNITNGFDRTFGPQFYLFNGGKGSTSSLQDLRSEAAKLADPSWNAEFYDSIAKHVVGYVPSSKRGSVDGRVKLPKGATNPIAILTVDGQYFQDNSVVPSSYQYWTDIDTSGKFRIDRVVEGKYRLTVYADGIFGDFVRDGVTVKAGKTTTVKEKWDAESAGKEVWRLGTPDKSSGEFRHGVARDPTHPLHPPEYLIYWGAYDWQSDLPKGIDYRIGSSDPATDFNTVHWSVFGPTPDNPDVEYNTTHDWKINFSLTKKQLRNSKKATLTIQLAGAKTASGNTDVYNASEPYINLSHESYINDQKEPLSFVIGFNQSSSCIVRSAVSCYQVRSRMEFPADWLKVGENTLTLHLPYNATDTETAILPATVYVQYDALRLELD.

The signal sequence occupies residues Met1 to Ala19. 10 N-linked (GlcNAc...) asparagine glycosylation sites follow: Asn110, Asn143, Asn239, Asn280, Asn522, Asn530, Asn564, Asn571, Asn592, and Asn633.

The protein belongs to the polysaccharide lyase 4 family.

It localises to the secreted. It carries out the reaction Endotype eliminative cleavage of L-alpha-rhamnopyranosyl-(1-&gt;4)-alpha-D-galactopyranosyluronic acid bonds of rhamnogalacturonan I domains in ramified hairy regions of pectin leaving L-rhamnopyranose at the reducing end and 4-deoxy-4,5-unsaturated D-galactopyranosyluronic acid at the non-reducing end.. Functionally, pectinolytic enzymes consist of four classes of enzymes: pectin lyase, polygalacturonase, pectin methylesterase and rhamnogalacturonase. Degrades the rhamnogalacturonan I (RG-I) backbone of pectin. In Neosartorya fischeri (strain ATCC 1020 / DSM 3700 / CBS 544.65 / FGSC A1164 / JCM 1740 / NRRL 181 / WB 181) (Aspergillus fischerianus), this protein is Probable rhamnogalacturonate lyase B (rglB).